A 257-amino-acid chain; its full sequence is Protein LigF (257 aa).

Residues 1 to 82 (MTLKLYSFGP…YLEDVFPESG (82 aa)) enclose the GST N-terminal domain. A GST C-terminal domain is found at 89–257 (DPFKRAEMRV…LLKRQNEKVA (169 aa)).

This sequence belongs to the GST superfamily.

In terms of biological role, lignin degradation enzyme. This is Protein LigF (ligF) from Sphingobium sp. (strain NBRC 103272 / SYK-6).